The primary structure comprises 791 residues: Primase D5 (791 aa).

Residue Asp174 is part of the active site. The interval 346–471 is primase; sequence SDRGEYLVWL…ELMSILDDIQ (126 aa). One can recognise an SF3 helicase domain in the interval 479 to 641; it reads ENRELYEQIL…FTNTKKKVHN (163 aa). 505–512 is an ATP binding site; the sequence is GETATGKS.

This sequence belongs to the poxviridae D5 family. In terms of assembly, interacts with A20.

In terms of biological role, primase which may have roles in initiation of DNA replication or lagging-strand synthesis. The polypeptide is Primase D5 (Fowlpox virus (strain NVSL) (FPV)).